Here is a 338-residue protein sequence, read N- to C-terminus: Lipoate-protein ligase A (338 aa).

In terms of domain architecture, BPL/LPL catalytic spans 29 to 216 (PTTQRVLFLW…AFFDYFGEQC (188 aa)). ATP contacts are provided by residues R71, 76-79 (GAVF), and K134. Residue K134 coordinates (R)-lipoate.

This sequence belongs to the LplA family. In terms of assembly, monomer.

The protein localises to the cytoplasm. The catalysed reaction is L-lysyl-[lipoyl-carrier protein] + (R)-lipoate + ATP = N(6)-[(R)-lipoyl]-L-lysyl-[lipoyl-carrier protein] + AMP + diphosphate + H(+). It functions in the pathway protein modification; protein lipoylation via exogenous pathway; protein N(6)-(lipoyl)lysine from lipoate: step 1/2. It participates in protein modification; protein lipoylation via exogenous pathway; protein N(6)-(lipoyl)lysine from lipoate: step 2/2. Catalyzes both the ATP-dependent activation of exogenously supplied lipoate to lipoyl-AMP and the transfer of the activated lipoyl onto the lipoyl domains of lipoate-dependent enzymes. The polypeptide is Lipoate-protein ligase A (Pectobacterium carotovorum subsp. carotovorum (strain PC1)).